Here is a 214-residue protein sequence, read N- to C-terminus: Probable nicotinate-nucleotide adenylyltransferase (214 aa).

The protein belongs to the NadD family.

The catalysed reaction is nicotinate beta-D-ribonucleotide + ATP + H(+) = deamido-NAD(+) + diphosphate. It participates in cofactor biosynthesis; NAD(+) biosynthesis; deamido-NAD(+) from nicotinate D-ribonucleotide: step 1/1. Catalyzes the reversible adenylation of nicotinate mononucleotide (NaMN) to nicotinic acid adenine dinucleotide (NaAD). This Psychromonas ingrahamii (strain DSM 17664 / CCUG 51855 / 37) protein is Probable nicotinate-nucleotide adenylyltransferase.